We begin with the raw amino-acid sequence, 134 residues long: MGRSRRTGAHRAHSLARQMKAKRRRPDLDEIHRELRPQGSARPQPDPNAEFDPDLPGGGLHRCLACARYFIDSTNLKTHFRSKDHKKRLKQLSVEPYSQEEAERAAGMGSYVPPRRLAVPTEVSTEVPEMDTST.

Over residues 1-25 (MGRSRRTGAHRAHSLARQMKAKRRR) the composition is skewed to basic residues. Disordered regions lie at residues 1-57 (MGRS…DLPG) and 82-134 (SKDH…DTST). Residues 26–36 (PDLDEIHRELR) are compositionally biased toward basic and acidic residues. The segment at 61-85 (HRCLACARYFIDSTNLKTHFRSKDH) adopts a C2H2-type zinc-finger fold.

This sequence belongs to the ZNF593/BUD20 C2H2-type zinc-finger protein family. Associates with pre-60S ribosomal particles. In terms of tissue distribution, ubiquitous. Detected in spleen, prostate, testis, small intestine, colon and to a minor level in thymus and peripheral blood leukocytes.

It localises to the nucleus. The protein resides in the nucleolus. The protein localises to the cytoplasm. Its function is as follows. Involved in pre-60S ribosomal particles maturation by promoting the nuclear export of the 60S ribosome. Negatively modulates the DNA binding activity of Oct-2 and therefore its transcriptional regulatory activity. The chain is Zinc finger protein 593 (ZNF593) from Homo sapiens (Human).